The primary structure comprises 307 residues: Transcription initiation factor IIB 5 (307 aa).

A TFIIB-type zinc finger spans residues 19–47; it reads TTEPCPECGGPVRTNSAETVCADCGLIID. 4 residues coordinate Zn(2+): C23, C26, C39, and C42. 2 stretches are compositionally biased toward basic and acidic residues: residues 54–66 and 107–121; these read GPEW…DTAK and MRRE…STKE. Residues 54 to 121 form a disordered region; that stretch reads GPEWHRDDAD…SRGRWRSTKE (68 aa). Tandem repeats lie at residues 129 to 212 and 223 to 304.

This sequence belongs to the TFIIB family.

Stabilizes TBP binding to an archaeal box-A promoter. Also responsible for recruiting RNA polymerase II to the pre-initiation complex (DNA-TBP-TFIIB). This Halobacterium salinarum (strain ATCC 700922 / JCM 11081 / NRC-1) (Halobacterium halobium) protein is Transcription initiation factor IIB 5.